The following is a 266-amino-acid chain: Probable metal transport system membrane protein TP_0036 (266 aa).

The next 8 membrane-spanning stretches (helical) occupy residues 10–30 (AFVA…HLVL), 34–54 (ALMG…AVSC), 56–76 (IHPG…IEFL), 88–108 (LSIV…SGLI), 120–140 (ILVV…FCVG), 172–192 (VASV…GILV), 211–231 (FLLT…LGLV), and 238–258 (VAPG…VIAL).

Belongs to the ABC-3 integral membrane protein family.

Its subcellular location is the cell inner membrane. Part of an ATP-driven transport system TP_0034/TP_0035/TP_0036 for a metal. This chain is Probable metal transport system membrane protein TP_0036, found in Treponema pallidum (strain Nichols).